Consider the following 296-residue polypeptide: Triplex capsid protein 2 (296 aa).

This sequence belongs to the herpesviridae TRX2 protein family. Interacts with TRX1 and major capisd protein/MCP.

The protein resides in the virion. It localises to the host nucleus. Functionally, structural component of the T=16 icosahedral capsid. The capsid is composed of pentamers and hexamers of major capsid protein/MCP, which are linked together by heterotrimers called triplexes. These triplexes are formed by a single molecule of triplex protein 1/TRX1 and two copies of triplex protein 2/TRX2. Additionally, TRX1 is required for efficient transport of TRX2 to the nucleus, which is the site of capsid assembly. The sequence is that of Triplex capsid protein 2 from Human herpesvirus 6A (strain Uganda-1102) (HHV-6 variant A).